The primary structure comprises 72 residues: Large ribosomal subunit protein bL28 (72 aa).

It belongs to the bacterial ribosomal protein bL28 family.

The chain is Large ribosomal subunit protein bL28 from Chlorobium luteolum (strain DSM 273 / BCRC 81028 / 2530) (Pelodictyon luteolum).